We begin with the raw amino-acid sequence, 427 residues long: Enolase (427 aa).

Residue glutamine 163 participates in (2R)-2-phosphoglycerate binding. Residue glutamate 205 is the Proton donor of the active site. Positions 242, 285, and 312 each coordinate Mg(2+). (2R)-2-phosphoglycerate contacts are provided by lysine 337, arginine 366, serine 367, and lysine 388. Catalysis depends on lysine 337, which acts as the Proton acceptor.

Belongs to the enolase family. Mg(2+) serves as cofactor.

It localises to the cytoplasm. It is found in the secreted. Its subcellular location is the cell surface. It carries out the reaction (2R)-2-phosphoglycerate = phosphoenolpyruvate + H2O. The protein operates within carbohydrate degradation; glycolysis; pyruvate from D-glyceraldehyde 3-phosphate: step 4/5. Catalyzes the reversible conversion of 2-phosphoglycerate (2-PG) into phosphoenolpyruvate (PEP). It is essential for the degradation of carbohydrates via glycolysis. The polypeptide is Enolase (Rhodopseudomonas palustris (strain TIE-1)).